A 179-amino-acid chain; its full sequence is Acireductone dioxygenase (179 aa).

Residues histidine 100, histidine 102, glutamate 106, and histidine 145 each contribute to the Fe(2+) site. Residues histidine 100, histidine 102, glutamate 106, and histidine 145 each coordinate Ni(2+).

The protein belongs to the acireductone dioxygenase (ARD) family. As to quaternary structure, monomer. Requires Fe(2+) as cofactor. Ni(2+) serves as cofactor.

The enzyme catalyses 1,2-dihydroxy-5-(methylsulfanyl)pent-1-en-3-one + O2 = 3-(methylsulfanyl)propanoate + CO + formate + 2 H(+). The catalysed reaction is 1,2-dihydroxy-5-(methylsulfanyl)pent-1-en-3-one + O2 = 4-methylsulfanyl-2-oxobutanoate + formate + 2 H(+). It participates in amino-acid biosynthesis; L-methionine biosynthesis via salvage pathway; L-methionine from S-methyl-5-thio-alpha-D-ribose 1-phosphate: step 5/6. Catalyzes 2 different reactions between oxygen and the acireductone 1,2-dihydroxy-3-keto-5-methylthiopentene (DHK-MTPene) depending upon the metal bound in the active site. Fe-containing acireductone dioxygenase (Fe-ARD) produces formate and 2-keto-4-methylthiobutyrate (KMTB), the alpha-ketoacid precursor of methionine in the methionine recycle pathway. Ni-containing acireductone dioxygenase (Ni-ARD) produces methylthiopropionate, carbon monoxide and formate, and does not lie on the methionine recycle pathway. The polypeptide is Acireductone dioxygenase (Bacillus licheniformis (strain ATCC 14580 / DSM 13 / JCM 2505 / CCUG 7422 / NBRC 12200 / NCIMB 9375 / NCTC 10341 / NRRL NRS-1264 / Gibson 46)).